The following is a 273-amino-acid chain: Formamidopyrimidine-DNA glycosylase (273 aa).

Catalysis depends on proline 2, which acts as the Schiff-base intermediate with DNA. Glutamate 3 (proton donor) is an active-site residue. Residue lysine 59 is the Proton donor; for beta-elimination activity of the active site. Residues histidine 92 and arginine 111 each coordinate DNA. The segment at 239-273 (KVYGKTDEPCVVCGTPIEKIKLNGRGTHFCPNCQK) adopts an FPG-type zinc-finger fold. The active-site Proton donor; for delta-elimination activity is arginine 263.

This sequence belongs to the FPG family. Monomer. Zn(2+) is required as a cofactor.

It catalyses the reaction Hydrolysis of DNA containing ring-opened 7-methylguanine residues, releasing 2,6-diamino-4-hydroxy-5-(N-methyl)formamidopyrimidine.. The catalysed reaction is 2'-deoxyribonucleotide-(2'-deoxyribose 5'-phosphate)-2'-deoxyribonucleotide-DNA = a 3'-end 2'-deoxyribonucleotide-(2,3-dehydro-2,3-deoxyribose 5'-phosphate)-DNA + a 5'-end 5'-phospho-2'-deoxyribonucleoside-DNA + H(+). In terms of biological role, involved in base excision repair of DNA damaged by oxidation or by mutagenic agents. Acts as a DNA glycosylase that recognizes and removes damaged bases. Has a preference for oxidized purines, such as 7,8-dihydro-8-oxoguanine (8-oxoG). Has AP (apurinic/apyrimidinic) lyase activity and introduces nicks in the DNA strand. Cleaves the DNA backbone by beta-delta elimination to generate a single-strand break at the site of the removed base with both 3'- and 5'-phosphates. This Listeria monocytogenes serovar 1/2a (strain ATCC BAA-679 / EGD-e) protein is Formamidopyrimidine-DNA glycosylase.